The following is a 456-amino-acid chain: Phosphomannomutase (456 aa).

The Phosphoserine intermediate role is filled by Ser-98. Mg(2+) is bound by residues Ser-98, Asp-245, Asp-247, and Asp-249.

It belongs to the phosphohexose mutase family. Mg(2+) is required as a cofactor.

It catalyses the reaction alpha-D-mannose 1-phosphate = D-mannose 6-phosphate. It functions in the pathway nucleotide-sugar biosynthesis; GDP-alpha-D-mannose biosynthesis; alpha-D-mannose 1-phosphate from D-fructose 6-phosphate: step 2/2. In terms of biological role, involved in the biosynthesis of the capsular polysaccharide colanic acid. The polypeptide is Phosphomannomutase (manB) (Salmonella typhimurium (strain LT2 / SGSC1412 / ATCC 700720)).